Consider the following 175-residue polypeptide: Large ribosomal subunit protein uL6 (175 aa).

This sequence belongs to the universal ribosomal protein uL6 family. As to quaternary structure, part of the 50S ribosomal subunit.

In terms of biological role, this protein binds to the 23S rRNA, and is important in its secondary structure. It is located near the subunit interface in the base of the L7/L12 stalk, and near the tRNA binding site of the peptidyltransferase center. The chain is Large ribosomal subunit protein uL6 from Xylella fastidiosa (strain M23).